The chain runs to 1385 residues: DNA-directed RNA polymerase subunit beta (1385 aa).

The protein belongs to the RNA polymerase beta chain family. The RNAP catalytic core consists of 2 alpha, 1 beta, 1 beta' and 1 omega subunit. When a sigma factor is associated with the core the holoenzyme is formed, which can initiate transcription.

It catalyses the reaction RNA(n) + a ribonucleoside 5'-triphosphate = RNA(n+1) + diphosphate. Its function is as follows. DNA-dependent RNA polymerase catalyzes the transcription of DNA into RNA using the four ribonucleoside triphosphates as substrates. The chain is DNA-directed RNA polymerase subunit beta from Jannaschia sp. (strain CCS1).